The following is a 545-amino-acid chain: Chaperonin GroEL (545 aa).

Residues 30-33 (TLGP), lysine 51, 87-91 (DGTTT), glycine 415, 479-481 (NAA), and aspartate 495 each bind ATP. A disordered region spans residues 526-545 (KEDKPDLGGAGGMGGMGGMM). The segment covering 533–545 (GGAGGMGGMGGMM) has biased composition (gly residues).

It belongs to the chaperonin (HSP60) family. Forms a cylinder of 14 subunits composed of two heptameric rings stacked back-to-back. Interacts with the co-chaperonin GroES.

It localises to the cytoplasm. The enzyme catalyses ATP + H2O + a folded polypeptide = ADP + phosphate + an unfolded polypeptide.. Functionally, together with its co-chaperonin GroES, plays an essential role in assisting protein folding. The GroEL-GroES system forms a nano-cage that allows encapsulation of the non-native substrate proteins and provides a physical environment optimized to promote and accelerate protein folding. In Sodalis glossinidius, this protein is Chaperonin GroEL.